Here is a 216-residue protein sequence, read N- to C-terminus: Pyridoxine/pyridoxamine 5'-phosphate oxidase (216 aa).

FMN-binding positions include 63 to 68 (RMVLMK), 78 to 79 (YS), lysine 85, and glutamine 107. Lysine 68 serves as a coordination point for substrate. Positions 125 and 129 each coordinate substrate. FMN-binding positions include 142 to 143 (QS) and tryptophan 187. 193–195 (RLH) provides a ligand contact to substrate. Arginine 197 lines the FMN pocket.

It belongs to the pyridoxamine 5'-phosphate oxidase family. In terms of assembly, homodimer. The cofactor is FMN.

It catalyses the reaction pyridoxamine 5'-phosphate + O2 + H2O = pyridoxal 5'-phosphate + H2O2 + NH4(+). It carries out the reaction pyridoxine 5'-phosphate + O2 = pyridoxal 5'-phosphate + H2O2. The protein operates within cofactor metabolism; pyridoxal 5'-phosphate salvage; pyridoxal 5'-phosphate from pyridoxamine 5'-phosphate: step 1/1. It functions in the pathway cofactor metabolism; pyridoxal 5'-phosphate salvage; pyridoxal 5'-phosphate from pyridoxine 5'-phosphate: step 1/1. Functionally, catalyzes the oxidation of either pyridoxine 5'-phosphate (PNP) or pyridoxamine 5'-phosphate (PMP) into pyridoxal 5'-phosphate (PLP). The chain is Pyridoxine/pyridoxamine 5'-phosphate oxidase from Bradyrhizobium sp. (strain ORS 278).